The primary structure comprises 394 residues: Proliferation-associated protein 2G4 (394 aa).

Position 2 is an N-acetylserine (S2). S2 bears the Phosphoserine mark. The necessary for nucleolar localization stretch occupies residues 2–48; the sequence is SGEDEQQEQTIAEDLVVTKYKMGGDIANRVLRSLVEASSSGVSVLSL. The segment at 46–54 is RNA-binding; the sequence is LSLCEKGDA. Residue K298 forms a Glycyl lysine isopeptide (Lys-Gly) (interchain with G-Cter in SUMO2) linkage. A necessary for nucleolar localization region spans residues 301–394; that stretch reads LLQPFNVLYE…ETLEENEAGD (94 aa). S335 carries the phosphoserine modification. Positions 358-394 are disordered; that stretch reads LQSSASRKTQKKKKKKASKTAENATSGETLEENEAGD. Residue S361 is modified to Phosphoserine; by PKC/PRKCD. Positions 361–375 are interaction with RNA; that stretch reads SASRKTQKKKKKKAS. Basic residues predominate over residues 365-375; it reads KTQKKKKKKAS. Residues T366 and T386 each carry the phosphothreonine modification.

This sequence belongs to the peptidase M24 family. Isoform 2 interacts with the cytoplasmic domain of non-phosphorylated ERBB3; the interaction requires PKC activity. Interacts with AR. Treatment with HRG leads to dissociation from ERBB3 and increases association with AR. Interacts with NCL/nucleolin. Component of a ribonucleoprotein complex containing at least PA2G4, NCL, TOP1, PABPC2, RPLP0, acetylated histone H1 (HIST1H1A or H1F1), histone H1 2/4, RPL4, RPL8, RPL15, RPL18, RPL18A, RPL21, RPL11, RPL12, RPL28, RPL27, RPLP2 and RPL24. Interacts with HDAC2. Interacts with RB1; the interaction is enhanced upon PA2G4 dephosphorylation. Interacts with AKT1. Isoform 1 and isoform 2 interact with RNF20. Isoform 2 interacts with HUWE1. Interacts with DNAJC21. In terms of processing, phosphorylated on serine and threonine residues. Phosphorylation is enhanced by HRG treatment. Basal phosphorylation is PKC-dependent and HRG-induced phosphorylation is predominantly PKC-independent. Phosphorylation at Ser-361 by PKC/PRKCD regulates its nucleolar localization. In cancer cells, isoform 2 is polyubiquitinated leading to its proteasomal degradation and phosphorylation by PKC/PRKCD enhances polyubiquitination. As to expression, isoform 2 is undetectable whereas isoform 1 is strongly expressed in cancer cells (at protein level). Isoform 1 and isoform 2 are widely expressed, including heart, brain, lung, pancreas, skeletal muscle, kidney, placenta and liver.

The protein localises to the cytoplasm. It localises to the nucleus. Its subcellular location is the nucleolus. Its function is as follows. May play a role in a ERBB3-regulated signal transduction pathway. Seems be involved in growth regulation. Acts a corepressor of the androgen receptor (AR) and is regulated by the ERBB3 ligand neuregulin-1/heregulin (HRG). Inhibits transcription of some E2F1-regulated promoters, probably by recruiting histone acetylase (HAT) activity. Binds RNA. Associates with 28S, 18S and 5.8S mature rRNAs, several rRNA precursors and probably U3 small nucleolar RNA. May be involved in regulation of intermediate and late steps of rRNA processing. May be involved in ribosome assembly. Mediates cap-independent translation of specific viral IRESs (internal ribosomal entry site). Regulates cell proliferation, differentiation, and survival. Isoform 1 suppresses apoptosis whereas isoform 2 promotes cell differentiation. The sequence is that of Proliferation-associated protein 2G4 (PA2G4) from Homo sapiens (Human).